A 79-amino-acid polypeptide reads, in one-letter code: D-alanyl carrier protein (79 aa).

Residues 1 to 77 enclose the Carrier domain; sequence MDTKQGVLDI…KIVAKVESLE (77 aa). S35 carries the post-translational modification O-(pantetheine 4'-phosphoryl)serine.

Belongs to the DltC family. In terms of processing, 4'-phosphopantetheine is transferred from CoA to a specific serine of apo-DCP.

The protein resides in the cytoplasm. The protein operates within cell wall biogenesis; lipoteichoic acid biosynthesis. Functionally, carrier protein involved in the D-alanylation of lipoteichoic acid (LTA). The loading of thioester-linked D-alanine onto DltC is catalyzed by D-alanine--D-alanyl carrier protein ligase DltA. The DltC-carried D-alanyl group is further transferred to cell membrane phosphatidylglycerol (PG) by forming an ester bond, probably catalyzed by DltD. D-alanylation of LTA plays an important role in modulating the properties of the cell wall in Gram-positive bacteria, influencing the net charge of the cell wall. This Lactobacillus acidophilus (strain ATCC 700396 / NCK56 / N2 / NCFM) protein is D-alanyl carrier protein.